The chain runs to 394 residues: Guanine nucleotide-binding protein G(s) subunit alpha isoforms short (394 aa).

The disordered stretch occupies residues 1–23; it reads MGCLGNSKTEDQRNEEKAQREAN. Residue G2 is the site of N-palmitoyl glycine attachment. C3 carries the S-palmitoyl cysteine lipid modification. The span at 8–23 shows a compositional bias: basic and acidic residues; sequence KTEDQRNEEKAQREAN. Residues 39-394 enclose the G-alpha domain; sequence ATHRLLLLGA…RMHLRQYELL (356 aa). The tract at residues 42 to 55 is G1 motif; that stretch reads RLLLLGAGESGKST. 47-55 serves as a coordination point for GTP; sequence GAGESGKST. Position 54 (S54) interacts with Mg(2+). Positions 68 to 91 are disordered; the sequence is FNGEGGEEDPQAARSNSDGEKATK. Residues 196 to 204 form a G2 motif region; sequence DLLRCRVLT. Residues 197–204, 223–227, and 292–295 contribute to the GTP site; these read LLRCRVLT, DVGGQ, and NKQD. Residue T204 coordinates Mg(2+). Residues 219–228 form a G3 motif region; it reads FHMFDVGGQR. A G4 motif region spans residues 288-295; it reads ILFLNKQD. K300 is covalently cross-linked (Glycyl lysine isopeptide (Lys-Gly) (interchain with G-Cter in ubiquitin)). Position 352 is a phosphoserine (S352). A G5 motif region spans residues 364-369; that stretch reads TCAVDT. A366 contributes to the GTP binding site.

Belongs to the G-alpha family. G(s) subfamily. In terms of assembly, heterotrimeric G proteins are composed of 3 units; alpha, beta and gamma. The alpha chain contains the guanine nucleotide binding site. Component of the TAS2R14-GNAS2 complex, consisting of TAS2R14, GNAS2, GNB1 and GNG2; within the complex interacts with TAS2R14; this complex plays a role in the perception of bitterness. Interacts with CRY1; the interaction may block GPCR-mediated regulation of cAMP concentrations. Interacts with ADCY6 and stimulates its adenylyl cyclase activity. Interacts with ADCY2 and ADCY5. Stimulates the ADCY5 adenylyl cyclase activity. Interacts (GDP-bound form) with RIC8B; promoting GNAS folding and association with the plasma membrane. Interaction with SASH1. Interacts with GASL2L2.

It localises to the cell membrane. It catalyses the reaction GTP + H2O = GDP + phosphate + H(+). Functionally, guanine nucleotide-binding proteins (G proteins) function as transducers in numerous signaling pathways controlled by G protein-coupled receptors (GPCRs). The alpha chain contains the guanine nucleotide binding site and alternates between an active, GTP-bound state and an inactive, GDP-bound state. Signaling by an activated GPCR promotes GDP release and GTP binding. The alpha subunit has a low GTPase activity that converts bound GTP to GDP, thereby terminating the signal. Both GDP release and GTP hydrolysis are modulated by numerous regulatory proteins. Signaling involves the activation of adenylyl cyclases, resulting in increased levels of the signaling molecule cAMP. Functions downstream of beta-adrenergic receptors. Stimulates the Ras signaling pathway via RAPGEF2. This is Guanine nucleotide-binding protein G(s) subunit alpha isoforms short (GNAS) from Bos taurus (Bovine).